The sequence spans 307 residues: Salivary glue protein Sgs-3 (307 aa).

The first 23 residues, M1–C23, serve as a signal peptide directing secretion. Positions A56–K257 are disordered.

Post-translationally, O-glycosylated by Pgnat9 in salivary glands. As to expression, specifically expressed in the salivary gland.

The protein resides in the secreted. The protein is Salivary glue protein Sgs-3 of Drosophila melanogaster (Fruit fly).